The chain runs to 46 residues: Lantibiotic streptin (46 aa).

Positions methionine 1–valine 24 are excised as a propeptide.

Belongs to the type A lantibiotic family. In terms of processing, maturation of lantibiotics involves the enzymatic conversion of Thr, and Ser into dehydrated AA and the formation of thioether bonds with cysteine. This is followed by membrane translocation and cleavage of the modified precursor.

Its function is as follows. Lanthionine-containing peptide antibiotic (lantibiotic) active on certain Gram-positive bacteria. The bactericidal activity of lantibiotics is based on depolarization of energized bacterial cytoplasmic membranes, initiated by the formation of aqueous transmembrane pores. This is Lantibiotic streptin (srtA) from Streptococcus pyogenes serotype M1.